The sequence spans 284 residues: Acetylglutamate kinase (284 aa).

Substrate is bound by residues 54–55, Arg-76, and Asn-179; that span reads GG.

This sequence belongs to the acetylglutamate kinase family. ArgB subfamily.

It localises to the cytoplasm. It catalyses the reaction N-acetyl-L-glutamate + ATP = N-acetyl-L-glutamyl 5-phosphate + ADP. It functions in the pathway amino-acid biosynthesis; L-arginine biosynthesis; N(2)-acetyl-L-ornithine from L-glutamate: step 2/4. Catalyzes the ATP-dependent phosphorylation of N-acetyl-L-glutamate. This chain is Acetylglutamate kinase, found in Sorangium cellulosum (strain So ce56) (Polyangium cellulosum (strain So ce56)).